The following is a 223-amino-acid chain: Neurotrophic factor BDNF precursor form (223 aa).

A signal peptide spans 1-5; sequence SCMKA. A propeptide spanning residues 6–114 is cleaved from the precursor; it reads APMKEVSIRG…AANMSMRVRR (109 aa). An N-linked (GlcNAc...) asparagine glycan is attached at N107. 2 disulfide bridges follow: C127–C194 and C172–C223.

It belongs to the NGF-beta family.

It is found in the secreted. In terms of biological role, promotes the survival of neuronal populations that are all located either in the central nervous system or directly connected to it. In Aspidites melanocephalus (Black-headed python), this protein is Neurotrophic factor BDNF precursor form (BDNF).